The primary structure comprises 370 residues: Putative agmatine deiminase (370 aa).

Polar residues predominate over residues 1 to 19 (MTNMNVDATQLTTKPSQDG). Positions 1–20 (MTNMNVDATQLTTKPSQDGF) are disordered. Residue cysteine 361 is the Amidino-cysteine intermediate of the active site.

It belongs to the agmatine deiminase family.

The catalysed reaction is agmatine + H2O = N-carbamoylputrescine + NH4(+). The sequence is that of Putative agmatine deiminase from Shewanella frigidimarina (strain NCIMB 400).